A 51-amino-acid chain; its full sequence is Large ribosomal subunit protein bL33 (51 aa).

This sequence belongs to the bacterial ribosomal protein bL33 family.

This Nitrosospira multiformis (strain ATCC 25196 / NCIMB 11849 / C 71) protein is Large ribosomal subunit protein bL33.